Reading from the N-terminus, the 122-residue chain is S-adenosylmethionine decarboxylase proenzyme (122 aa).

Residue S63 is the Schiff-base intermediate with substrate; via pyruvic acid of the active site. At S63 the chain carries Pyruvic acid (Ser); by autocatalysis. H68 serves as the catalytic Proton acceptor; for processing activity. The active-site Proton donor; for catalytic activity is C83.

The protein belongs to the prokaryotic AdoMetDC family. Type 1 subfamily. In terms of assembly, heterotetramer of two alpha and two beta chains arranged as a dimer of alpha/beta heterodimers. The cofactor is pyruvate. In terms of processing, is synthesized initially as an inactive proenzyme. Formation of the active enzyme involves a self-maturation process in which the active site pyruvoyl group is generated from an internal serine residue via an autocatalytic post-translational modification. Two non-identical subunits are generated from the proenzyme in this reaction, and the pyruvate is formed at the N-terminus of the alpha chain, which is derived from the carboxyl end of the proenzyme. The post-translation cleavage follows an unusual pathway, termed non-hydrolytic serinolysis, in which the side chain hydroxyl group of the serine supplies its oxygen atom to form the C-terminus of the beta chain, while the remainder of the serine residue undergoes an oxidative deamination to produce ammonia and the pyruvoyl group blocking the N-terminus of the alpha chain.

It catalyses the reaction S-adenosyl-L-methionine + H(+) = S-adenosyl 3-(methylsulfanyl)propylamine + CO2. Its pathway is amine and polyamine biosynthesis; S-adenosylmethioninamine biosynthesis; S-adenosylmethioninamine from S-adenosyl-L-methionine: step 1/1. Functionally, catalyzes the decarboxylation of S-adenosylmethionine to S-adenosylmethioninamine (dcAdoMet), the propylamine donor required for the synthesis of the polyamines spermine and spermidine from the diamine putrescine. The protein is S-adenosylmethionine decarboxylase proenzyme of Methanococcus maripaludis (strain C7 / ATCC BAA-1331).